The sequence spans 333 residues: DNA-directed RNA polymerase subunit alpha (333 aa).

The tract at residues 1 to 233 (MVREKVRVST…DLFIPFLHAE (233 aa)) is alpha N-terminal domain (alpha-NTD). The interval 266 to 333 (KKEIAFKSIF…DILEIEKHFP (68 aa)) is alpha C-terminal domain (alpha-CTD).

It belongs to the RNA polymerase alpha chain family. As to quaternary structure, in plastids the minimal PEP RNA polymerase catalytic core is composed of four subunits: alpha, beta, beta', and beta''. When a (nuclear-encoded) sigma factor is associated with the core the holoenzyme is formed, which can initiate transcription.

It localises to the plastid. The protein localises to the chloroplast. The catalysed reaction is RNA(n) + a ribonucleoside 5'-triphosphate = RNA(n+1) + diphosphate. Its function is as follows. DNA-dependent RNA polymerase catalyzes the transcription of DNA into RNA using the four ribonucleoside triphosphates as substrates. The sequence is that of DNA-directed RNA polymerase subunit alpha from Lotus japonicus (Lotus corniculatus var. japonicus).